Consider the following 484-residue polypeptide: Pre-glycoprotein polyprotein GP complex (484 aa).

Glycine 2 carries N-myristoyl glycine; by host lipidation. At 2–17 (GQLVSFFQEIPNIIQE) the chain is on the extracellular side. The chain crosses the membrane as a helical span at residues 18–33 (AINIALIAVSLIAILK). Residues 34–58 (GLVNLWKSGLFQLLVFLILAGRSCS) lie on the Cytoplasmic side of the membrane. Residue cysteine 57 coordinates Zn(2+). The Extracellular segment spans residues 59 to 423 (FKIGRSTELQ…QGKTPITLVD (365 aa)). Cystine bridges form between cysteine 85-cysteine 225, cysteine 270-cysteine 283, cysteine 292-cysteine 301, and cysteine 355-cysteine 376. N-linked (GlcNAc...) asparagine; by host glycans are attached at residues asparagine 88, asparagine 125, asparagine 178, and asparagine 218. Asparagine 356, asparagine 364, asparagine 381, and asparagine 386 each carry an N-linked (GlcNAc...) asparagine; by host glycan. The helical transmembrane segment at 424–444 (ICFWSTLFFTTTLFLHLVGFP) threads the bilayer. Over 445 to 484 (THRHIQGEPCPLPHKLNSNGGCRCGRYPELKKPTTWHRKH) the chain is Cytoplasmic. Zn(2+)-binding residues include histidine 446, histidine 448, cysteine 454, histidine 458, cysteine 466, cysteine 468, and histidine 484.

Belongs to the arenaviridae GPC protein family. Interacts with glycoprotein G2. Part of the GP complex (GP-C) together with glycoprotein G1 and glycoprotein G2. The GP-complex interacts with protein Z, which interacts with ribonucleocapsid; these interactions may induce virion budding. In terms of assembly, homotrimer; disulfide-linked. In pre-fusion state, G1 homotrimers bind G2 homotrimers via ionic interactions. Part of the GP complex (GP-C) together with glycoprotein G2 and the stable signal peptide. The GP-complex interacts with protein Z, which interacts with ribonucleocapsid; these interactions may induce virion budding. As to quaternary structure, homotrimer. Interacts with the stable signal peptide. In pre-fusion state, G2 homotrimers bind G1 homotrimers via ionic interactions. Part of the GP complex (GP-C) together with glycoprotein G1 and the stable signal peptide. Acidification in the endosome triggers rearrangements, which ultimately leads to a 6 helix bundle formed by the two heptad repeat domains (HR1 and HR2) in post-fusion state. The GP-complex interacts with protein Z, which interacts with ribonucleocapsid; these interactions may induce virion budding. Post-translationally, specific enzymatic cleavages in vivo yield mature proteins. GP-C polyprotein is cleaved in the endoplasmic reticulum by the host protease MBTPS1. Only cleaved glycoprotein is incorporated into virions. The SSP remains stably associated with the GP complex following cleavage by signal peptidase and plays crucial roles in the trafficking of GP through the secretory pathway. In terms of processing, myristoylation is necessary for GP2-mediated fusion activity.

The protein localises to the virion membrane. The protein resides in the host endoplasmic reticulum membrane. Its subcellular location is the host Golgi apparatus membrane. It localises to the host cell membrane. Its function is as follows. Functions as a cleaved signal peptide that is retained as the third component of the GP complex (GP-C). Helps to stabilize the spike complex in its native conformation. The SSP is required for efficient glycoprotein expression, post-translational maturation cleavage of G1 and G2, glycoprotein transport to the cell surface plasma membrane, formation of infectious virus particles, and acid pH-dependent glycoprotein-mediated cell fusion. Functionally, glycoprotein G1: Forms the virion spikes together with glycoprotein G2. The glycoprotein spike trimers are connected to the underlying matrix. Interacts with the host receptor leading to virus endocytosis. Forms the virion spikes together with glycoprotein G1. The glycoprotein spike trimers are connected to the underlying matrix. Class I viral fusion protein that directs fusion of viral and host endosomal membranes, leading to delivery of the nucleocapsid into the cytoplasm. Membrane fusion is mediated by irreversible conformational changes induced by acidification. The protein is Pre-glycoprotein polyprotein GP complex of Chapare mammarenavirus (isolate Human/Bolivia/810419/2003).